A 374-amino-acid chain; its full sequence is Mannitol-1-phosphate 5-dehydrogenase (374 aa).

An NAD(+)-binding site is contributed by 3–14 (AVHFGAGNIGRG).

Belongs to the mannitol dehydrogenase family.

The catalysed reaction is D-mannitol 1-phosphate + NAD(+) = beta-D-fructose 6-phosphate + NADH + H(+). The sequence is that of Mannitol-1-phosphate 5-dehydrogenase from Shouchella clausii (strain KSM-K16) (Alkalihalobacillus clausii).